The sequence spans 309 residues: Oxygen-dependent coproporphyrinogen-III oxidase (309 aa).

Ser-100 serves as a coordination point for substrate. Residues His-104 and His-114 each coordinate a divalent metal cation. The Proton donor role is filled by His-114. Position 116-118 (116-118) interacts with substrate; that stretch reads NVR. The a divalent metal cation site is built by His-153 and His-183. The interval 248-283 is important for dimerization; it reads YAEFNLVYDRGTLFGLQSGGRTESILMSLPPIVHWE. 266–268 is a substrate binding site; sequence GGR.

Belongs to the aerobic coproporphyrinogen-III oxidase family. As to quaternary structure, homodimer. Requires a divalent metal cation as cofactor.

The protein localises to the cytoplasm. The catalysed reaction is coproporphyrinogen III + O2 + 2 H(+) = protoporphyrinogen IX + 2 CO2 + 2 H2O. It participates in porphyrin-containing compound metabolism; protoporphyrin-IX biosynthesis; protoporphyrinogen-IX from coproporphyrinogen-III (O2 route): step 1/1. In terms of biological role, involved in the heme biosynthesis. Catalyzes the aerobic oxidative decarboxylation of propionate groups of rings A and B of coproporphyrinogen-III to yield the vinyl groups in protoporphyrinogen-IX. In Legionella pneumophila (strain Lens), this protein is Oxygen-dependent coproporphyrinogen-III oxidase.